A 180-amino-acid chain; its full sequence is Free methionine-R-sulfoxide reductase (180 aa).

The region spanning 99–177 (GVCGTAASTK…KLAKLINKSC (79 aa)) is the GAF domain.

Belongs to the free Met sulfoxide reductase family.

The protein localises to the cytoplasm. Its subcellular location is the nucleus. It carries out the reaction [thioredoxin]-disulfide + L-methionine + H2O = L-methionine (R)-S-oxide + [thioredoxin]-dithiol. Catalyzes the reversible oxidation-reduction of the R-enantiomer of free methionine sulfoxide to methionine. Does not act on S-enantiomer of free methionine sulfoxide or R-enantiomer of dabsylated methionine sulfoxide. Involved in protection against oxidative stress. This Saccharomyces cerevisiae (strain ATCC 204508 / S288c) (Baker's yeast) protein is Free methionine-R-sulfoxide reductase.